The following is a 183-amino-acid chain: Ubiquitin-conjugating enzyme E2-21 kDa (183 aa).

In terms of domain architecture, UBC core spans 17–179; it reads TCMSRIVKEY…VKYFLAERER (163 aa). The Glycyl thioester intermediate role is filled by Cys-115.

It belongs to the ubiquitin-conjugating enzyme family.

It localises to the peroxisome. It catalyses the reaction S-ubiquitinyl-[E1 ubiquitin-activating enzyme]-L-cysteine + [E2 ubiquitin-conjugating enzyme]-L-cysteine = [E1 ubiquitin-activating enzyme]-L-cysteine + S-ubiquitinyl-[E2 ubiquitin-conjugating enzyme]-L-cysteine.. The protein operates within protein modification; protein ubiquitination. Functionally, catalyzes the covalent attachment of ubiquitin to other proteins. Essential for peroxisome biogenesis. Required for UBC4-independent ubiquitination of PEX5. The polypeptide is Ubiquitin-conjugating enzyme E2-21 kDa (PEX4) (Saccharomyces cerevisiae (strain ATCC 204508 / S288c) (Baker's yeast)).